Consider the following 323-residue polypeptide: Ribose-phosphate pyrophosphokinase 2 (323 aa).

ATP-binding positions include 43 to 45 and 102 to 103; these read DGE and RQ. Residues His136 and Asp177 each coordinate Mg(2+). Residue Lys200 is part of the active site. D-ribose 5-phosphate contacts are provided by residues Arg202, Asp226, and 230-234; that span reads DTAGT.

Belongs to the ribose-phosphate pyrophosphokinase family. Class I subfamily. As to quaternary structure, homohexamer. Mg(2+) serves as cofactor.

It is found in the cytoplasm. It carries out the reaction D-ribose 5-phosphate + ATP = 5-phospho-alpha-D-ribose 1-diphosphate + AMP + H(+). It participates in metabolic intermediate biosynthesis; 5-phospho-alpha-D-ribose 1-diphosphate biosynthesis; 5-phospho-alpha-D-ribose 1-diphosphate from D-ribose 5-phosphate (route I): step 1/1. Involved in the biosynthesis of the central metabolite phospho-alpha-D-ribosyl-1-pyrophosphate (PRPP) via the transfer of pyrophosphoryl group from ATP to 1-hydroxyl of ribose-5-phosphate (Rib-5-P). In Enterococcus faecalis (strain ATCC 700802 / V583), this protein is Ribose-phosphate pyrophosphokinase 2.